Reading from the N-terminus, the 610-residue chain is Scarecrow-like protein 11 (610 aa).

Disordered regions lie at residues 32 to 54, 98 to 159, and 186 to 220; these read NNLFPDFHESQNQSSPNDSPPTV, QQSP…RRNK, and QEEEEERTVITKQSTPNRAGRAKGSSNKSKTHKTN. 2 stretches are compositionally biased toward low complexity: residues 41–52 and 99–119; these read SQNQSSPNDSPP and QSPESDQNTSSSSDQNSGDQD. Composition is skewed to polar residues over residues 123–137 and 209–220; these read PSTTTDSSALVSSGE and GSSNKSKTHKTN. In terms of domain architecture, GRAS spans 215-598; sequence KTHKTNTVDL…RVIYAFSCWK (384 aa). The segment at 222-283 is leucine repeat I (LRI); that stretch reads VDLRSLLTQC…ARITGNISPP (62 aa). Residues 302 to 367 form a VHIID region; that stretch reads YKLFVHTCPI…GGPPMLRVTG (66 aa). The VHIID signature appears at 333–337; that stretch reads LHIVD. Residues 383-415 form a leucine repeat II (LRII) region; the sequence is ETGRRLKRFCDQFNVPFEFNFIAKKWETITLDE. Residues 424–520 form a PFYRE region; sequence TVVNCIHRLQ…RELLVRDAMS (97 aa). The segment at 523-598 is SAW; that stretch reads SCEGAERFAR…RVIYAFSCWK (76 aa).

The protein belongs to the GRAS family. In terms of tissue distribution, highly expressed in roots and at lower levels in leaves and sepals. Expressed in siliques.

It localises to the nucleus. In terms of biological role, probable transcription factor involved in plant development. The sequence is that of Scarecrow-like protein 11 (SCL11) from Arabidopsis thaliana (Mouse-ear cress).